An 80-amino-acid polypeptide reads, in one-letter code: Small ribosomal subunit protein uS17 (80 aa).

This sequence belongs to the universal ribosomal protein uS17 family. In terms of assembly, part of the 30S ribosomal subunit.

Functionally, one of the primary rRNA binding proteins, it binds specifically to the 5'-end of 16S ribosomal RNA. The protein is Small ribosomal subunit protein uS17 of Cereibacter sphaeroides (strain ATCC 17025 / ATH 2.4.3) (Rhodobacter sphaeroides).